The sequence spans 801 residues: Protein 4.1 (801 aa).

Residues 1-187 (MTTEKGLLAE…GESKASHKVV (187 aa)) form a disordered region. Residues 45–58 (EQSQESPSTTSPST) are compositionally biased toward low complexity. Residues 88 to 107 (SDEKEVELLGEKGQDQKDVD) are compositionally biased toward basic and acidic residues. Over residues 108-117 (EGLGEQLEDD) the composition is skewed to acidic residues. The span at 141–151 (SLSSAETQPAQ) shows a compositional bias: polar residues. Acidic residues predominate over residues 154-166 (QKEDQDPEADCED). Residues 167–182 (VEGKEPIKKPEGESKA) are compositionally biased toward basic and acidic residues. In terms of domain architecture, FERM spans 193-474 (MRCKVTLLDD…EHHTFFRLTS (282 aa)). Positions 477-587 (SIPKHRFLSL…GMPNQRESPK (111 aa)) are hydrophilic. Residues 516–613 (RTGSKRASRS…DKVKDLEKTQ (98 aa)) are disordered. Residues 563-577 (RVEEMPKKTEEKPKE) show a composition bias toward basic and acidic residues. The tract at residues 588–651 (DVKATQQDSP…WDKRLSTHSP (64 aa)) is spectrin--actin-binding. A compositionally biased stretch (polar residues) spans 591-601 (ATQQDSPSPTV). Positions 604 to 613 (DKVKDLEKTQ) are enriched in basic and acidic residues. A C-terminal (CTD) region spans residues 653-801 (RTLSFNGQVQ…GVVHQETEIA (149 aa)).

Binds with a high affinity to glycophorin and with lower affinity to band III protein. Associates with the nuclear mitotic apparatus. Binds calmodulin. In terms of processing, phosphorylated at multiple sites by different protein kinases and each phosphorylation event selectively modulates the protein's functions. Found exclusively in photoreceptors following the terminal mitosis of retinal neurons. When retinal synaptogenesis is complete, protein 4.1 is also expressed in the inner retina. In adult amphibian retinas, protein 4.1 is detected in photoreceptors, bipolar cells, and ganglion cell axons.

The protein resides in the nucleus. It localises to the cytoplasm. The protein localises to the cytoskeleton. It is found in the cell cortex. Its function is as follows. Protein 4.1 is a major structural element of the erythrocyte membrane skeleton. It plays a key role in regulating membrane physical properties of mechanical stability and deformability by stabilizing spectrin-actin interaction. May be required for dynein-dynactin complex and NUMA1 recruitment at the mitotic cell cortex during anaphase. This chain is Protein 4.1, found in Xenopus laevis (African clawed frog).